A 783-amino-acid chain; its full sequence is Endonuclease MutS2 (783 aa).

328–335 (GPNTGGKT) contributes to the ATP binding site. One can recognise a Smr domain in the interval 708 to 783 (LDLRGKRYEE…GSGCTIATLG (76 aa)).

Belongs to the DNA mismatch repair MutS family. MutS2 subfamily. Homodimer. Binds to stalled ribosomes, contacting rRNA.

Its function is as follows. Endonuclease that is involved in the suppression of homologous recombination and thus may have a key role in the control of bacterial genetic diversity. Functionally, acts as a ribosome collision sensor, splitting the ribosome into its 2 subunits. Detects stalled/collided 70S ribosomes which it binds and splits by an ATP-hydrolysis driven conformational change. Acts upstream of the ribosome quality control system (RQC), a ribosome-associated complex that mediates the extraction of incompletely synthesized nascent chains from stalled ribosomes and their subsequent degradation. Probably generates substrates for RQC. The polypeptide is Endonuclease MutS2 (Streptococcus thermophilus (strain ATCC BAA-491 / LMD-9)).